A 128-amino-acid chain; its full sequence is KHDC1-like protein (128 aa).

Belongs to the KHDC1 family.

The polypeptide is KHDC1-like protein (KHDC1L) (Homo sapiens (Human)).